The primary structure comprises 365 residues: MIYNFGAGPSVLPKEVLKKVQEELLDFEKSGMSVMEISHRSKSFQEVIDEAQNNLRDLMSIPQNYKILFLQGGASTQFSMIPMNLALGKKAYYAISGAFGKKAYDEAVKLSQTLDFEAISLGSTQSEYYNHLLKIDTSKVDEKMAAYLHITTNNTIEGTTIFPENLPEVNSVPLIADMSSNILAVDYDVSKFGLIYAGAQKNLGIAGLTIVIIREDLLNQKESLSSMMDYRILAQNGSMYNTPPTFAIYLAGLVFKWVKEQGGVKKLEAINHQKARMLYDLIDQSDFYQSPVLNKVERSICNVVFTSPSKELDALFVQKAEEKGFKSIKGHRSVGGMRASIYNAFPIEGVLELVKFMKKFEEENK.

Residue Arg-40 coordinates L-glutamate. Pyridoxal 5'-phosphate is bound by residues 74 to 75, Phe-99, Thr-155, Asp-177, and Gln-200; that span reads AS. An N6-(pyridoxal phosphate)lysine modification is found at Lys-201. Pyridoxal 5'-phosphate is bound at residue 241 to 242; that stretch reads NT.

It belongs to the class-V pyridoxal-phosphate-dependent aminotransferase family. SerC subfamily. As to quaternary structure, homodimer. Pyridoxal 5'-phosphate is required as a cofactor.

The protein resides in the cytoplasm. It carries out the reaction O-phospho-L-serine + 2-oxoglutarate = 3-phosphooxypyruvate + L-glutamate. The enzyme catalyses 4-(phosphooxy)-L-threonine + 2-oxoglutarate = (R)-3-hydroxy-2-oxo-4-phosphooxybutanoate + L-glutamate. It functions in the pathway amino-acid biosynthesis; L-serine biosynthesis; L-serine from 3-phospho-D-glycerate: step 2/3. Catalyzes the reversible conversion of 3-phosphohydroxypyruvate to phosphoserine and of 3-hydroxy-2-oxo-4-phosphonooxybutanoate to phosphohydroxythreonine. In Lactococcus lactis subsp. cremoris (strain MG1363), this protein is Phosphoserine aminotransferase.